Reading from the N-terminus, the 394-residue chain is GTPase Obg (394 aa).

One can recognise an Obg domain in the interval 4–162 (SNFVDYVKIY…LMVILELKLL (159 aa)). In terms of domain architecture, OBG-type G spans 163–329 (ADVGLVGFPN…LKDILWTELN (167 aa)). GTP-binding positions include 169–176 (GFPNAGKS), 194–198 (FTTLE), 216–219 (DIPG), 283–286 (TKSD), and 310–312 (SSV). 2 residues coordinate Mg(2+): Ser176 and Thr196. The disordered stretch occupies residues 358–394 (KDMGEDEDFEYEYEEDADDDFDYEYEDENWDEEEEKK). The segment covering 361–394 (GEDEDFEYEYEEDADDDFDYEYEDENWDEEEEKK) has biased composition (acidic residues).

This sequence belongs to the TRAFAC class OBG-HflX-like GTPase superfamily. OBG GTPase family. In terms of assembly, monomer. It depends on Mg(2+) as a cofactor.

It is found in the cytoplasm. In terms of biological role, an essential GTPase which binds GTP, GDP and possibly (p)ppGpp with moderate affinity, with high nucleotide exchange rates and a fairly low GTP hydrolysis rate. Plays a role in control of the cell cycle, stress response, ribosome biogenesis and in those bacteria that undergo differentiation, in morphogenesis control. This Phocaeicola vulgatus (strain ATCC 8482 / DSM 1447 / JCM 5826 / CCUG 4940 / NBRC 14291 / NCTC 11154) (Bacteroides vulgatus) protein is GTPase Obg.